Here is a 127-residue protein sequence, read N- to C-terminus: Translation initiation factor 5A (127 aa).

At K36 the chain carries Hypusine.

This sequence belongs to the eIF-5A family.

It localises to the cytoplasm. In terms of biological role, functions by promoting the formation of the first peptide bond. This chain is Translation initiation factor 5A (eif5a), found in Halobacterium salinarum (strain ATCC 700922 / JCM 11081 / NRC-1) (Halobacterium halobium).